Consider the following 49-residue polypeptide: Heme exporter protein C (49 aa).

Belongs to the CcmC/CycZ/HelC family.

The protein resides in the cell inner membrane. In terms of biological role, required for the export of heme to the periplasm for the biogenesis of c-type cytochromes. In Rhizobium leguminosarum bv. viciae, this protein is Heme exporter protein C.